We begin with the raw amino-acid sequence, 395 residues long: Serine-type anaerobic sulfatase-maturating enzyme (395 aa).

The 232-residue stretch at 18–249 (PRSPVPFHIL…QWRKRCDRGR (232 aa)) folds into the Radical SAM core domain. The [4Fe-4S] cluster site is built by cysteine 35 and cysteine 39. Tyrosine 41 is an S-adenosyl-L-methionine binding site. Position 42 (cysteine 42) interacts with [4Fe-4S] cluster. Positions 84 and 152 each coordinate S-adenosyl-L-methionine. [4Fe-4S] cluster-binding residues include cysteine 270, cysteine 276, and cysteine 291. The active-site Proton acceptor is the aspartate 292. [4Fe-4S] cluster is bound by residues cysteine 331, cysteine 334, cysteine 340, cysteine 344, and cysteine 357.

It belongs to the radical SAM superfamily. Anaerobic sulfatase-maturating enzyme family. In terms of assembly, monomer. Interacts with AtsA prior to its export to the periplasm. This interaction depends on the presence of AtsA 'Ser-72'. Binding of SAM to AtsB promotes the formation of a ternary AtsA-AtsB-SAM complex. It depends on [4Fe-4S] cluster as a cofactor.

It localises to the cytoplasm. It carries out the reaction L-seryl-[sulfatase] + S-adenosyl-L-methionine = 3-oxo-L-alanyl-[sulfatase] + 5'-deoxyadenosine + L-methionine + H(+). It participates in protein modification; sulfatase oxidation. Its activity is regulated as follows. Activity is inhibited by iron chelators. Functionally, involved in 'Ser-type' sulfatase maturation under anaerobic conditions. Catalyzes the post-translational modification of serine ('Ser-72' in the arylsulfatase AtsA) into 3-oxoalanine (also known as C(alpha)-formylglycine (FGly)), by a free radical chemical mechanism initiated via the reductive cleavage of S-adenosyl-L-methionine (SAM). Is capable of catalyzing multiple turnovers. In vitro, use of a peptide substrate in which the target serine is changed to cysteine also gives rise to turnover, supporting approximately 4-fold the activity of that observed with the natural substrate. The sequence is that of Serine-type anaerobic sulfatase-maturating enzyme from Klebsiella pneumoniae.